The sequence spans 990 residues: Serine/threonine-protein kinase ATG1 (990 aa).

A Protein kinase domain is found at 15–334 (FVIENEIGKG…FDDFFASPVI (320 aa)). Residues 21–29 (IGKGSFAVV) and Lys44 each bind ATP. Asp165 serves as the catalytic Proton acceptor. Positions 375–408 (VSSIEASTQQPGVQPPVSTATSPPALESRSTQEA) are enriched in polar residues. 5 disordered regions span residues 375–499 (VSSI…GGED), 529–566 (SRLGLASRRPSRLSRLSSGPLPSAPGASPPTAPPTILS), 579–614 (ASTGAFALPPGSRPSSFPRRASLSSSGSPSTRQGGQ), 750–784 (LSQELDSSTATSGISPSRNSVQGSARRVGSISSSS), and 970–990 (SPVGVDAEARPGVSRSRTESP). 2 stretches are compositionally biased toward low complexity: residues 529-554 (SRLGLASRRPSRLSRLSSGPLPSAPG) and 587-613 (PPGSRPSSFPRRASLSSSGSPSTRQGG). Over residues 750-771 (LSQELDSSTATSGISPSRNSVQ) the composition is skewed to polar residues. Positions 772–784 (GSARRVGSISSSS) are enriched in low complexity.

It belongs to the protein kinase superfamily. Ser/Thr protein kinase family. APG1/unc-51/ULK1 subfamily. In terms of assembly, homodimer. Forms a ternary complex with ATG13 and ATG17.

Its subcellular location is the cytoplasm. It is found in the preautophagosomal structure membrane. The enzyme catalyses L-seryl-[protein] + ATP = O-phospho-L-seryl-[protein] + ADP + H(+). It catalyses the reaction L-threonyl-[protein] + ATP = O-phospho-L-threonyl-[protein] + ADP + H(+). In terms of biological role, serine/threonine protein kinase involved in the cytoplasm to vacuole transport (Cvt) and found to be essential in autophagy, where it is required for the formation of autophagosomes. Involved in the clearance of protein aggregates which cannot be efficiently cleared by the proteasome. Required for selective autophagic degradation of the nucleus (nucleophagy) as well as for mitophagy which contributes to regulate mitochondrial quantity and quality by eliminating the mitochondria to a basal level to fulfill cellular energy requirements and preventing excess ROS production. Also involved in endoplasmic reticulum-specific autophagic process, in selective removal of ER-associated degradation (ERAD) substrates. Plays a key role in ATG9 and ATG23 cycling through the pre-autophagosomal structure and is necessary to promote ATG18 binding to ATG9 through phosphorylation of ATG9. Catalyzes phosphorylation of ATG4, decreasing the interaction between ATG4 and ATG8 and impairing deconjugation of PE-conjugated forms of ATG8. Required for wild-type budding of haploid sporidia and for complete symptom development during pathogenic growth such as gall formation and teliospore production in ears of mature maize. The protein is Serine/threonine-protein kinase ATG1 of Mycosarcoma maydis (Corn smut fungus).